We begin with the raw amino-acid sequence, 138 residues long: Putative pre-16S rRNA nuclease (138 aa).

The protein belongs to the YqgF nuclease family.

Its subcellular location is the cytoplasm. In terms of biological role, could be a nuclease involved in processing of the 5'-end of pre-16S rRNA. The protein is Putative pre-16S rRNA nuclease of Glaesserella parasuis serovar 5 (strain SH0165) (Haemophilus parasuis).